Reading from the N-terminus, the 604-residue chain is 3-hydroxy-3-methylglutaryl-coenzyme A reductase (604 aa).

The segment at 1–31 (MDVRRRSEKPAYPTKEFAAGEKPLKPHKQQQ) is disordered. The next 2 membrane-spanning stretches (helical) occupy residues 40-62 (ASDALPLPLYLTNGLFFTMFFSV) and 90-110 (AIASLIASVIYLLGFFGIGFV). The linker stretch occupies residues 111–189 (QSFVSRDNND…PLVTPAASEE (79 aa)). The interval 190–604 (DEEIIKSVVQ…STKDVTKASS (415 aa)) is catalytic. The active-site Charge relay system is the Glu-283. An N-linked (GlcNAc...) asparagine glycan is attached at Asn-347. Lys-415 serves as the catalytic Charge relay system. N-linked (GlcNAc...) asparagine glycosylation occurs at Asn-460. The active-site Charge relay system is Asp-491. His-589 functions as the Proton donor in the catalytic mechanism. N-linked (GlcNAc...) asparagine glycosylation occurs at Asn-593.

This sequence belongs to the HMG-CoA reductase family. In terms of tissue distribution, found in protoplasts and leaves submitted to stress. Low levels found in apexes, anthers and roots.

The protein resides in the endoplasmic reticulum membrane. It catalyses the reaction (R)-mevalonate + 2 NADP(+) + CoA = (3S)-3-hydroxy-3-methylglutaryl-CoA + 2 NADPH + 2 H(+). The protein operates within metabolic intermediate biosynthesis; (R)-mevalonate biosynthesis; (R)-mevalonate from acetyl-CoA: step 3/3. Its function is as follows. Catalyzes the synthesis of mevalonate, the specific precursor of all isoprenoid compounds present in plants. Possible role in plant defense mechanisms as well as in the cell cycle. The polypeptide is 3-hydroxy-3-methylglutaryl-coenzyme A reductase (HMGR) (Nicotiana sylvestris (Wood tobacco)).